A 375-amino-acid polypeptide reads, in one-letter code: Proclotting enzyme (375 aa).

The N-terminal stretch at 1 to 21 is a signal peptide; it reads MLVNNVFSLLCFPLLMSVVRC. Residues 22–27 constitute a propeptide that is removed on maturation; the sequence is STLSRQ. At Gln30 the chain carries Pyrrolidone carboxylic acid. In terms of domain architecture, Clip spans 39 to 84; it reads LCSNRFTEEGTCKNVLDCRILLQKNDYNLLKESICGFEGITPKVCC. Disulfide bonds link Cys40–Cys83, Cys50–Cys73, and Cys56–Cys84. A disordered region spans residues 90-113; that stretch reads VISSTQAPPETTTTERPPKQIPPN. Disulfide bonds link Cys118–Cys248, Cys157–Cys173, Cys295–Cys311, and Cys322–Cys351. The N-linked (GlcNAc...) asparagine glycan is linked to Asn122. Positions 128-375 constitute a Peptidase S1 domain; that stretch reads IIGGREAPIG…FLDWIAEHMV (248 aa). The active-site Charge relay system is the His172. 4 residues coordinate Ca(2+): Glu194, Asn196, Ser199, and Asp202. Residue Asp228 is the Charge relay system of the active site. N-linked (GlcNAc...) asparagine glycosylation is found at Asn235 and Asn304. The active-site Charge relay system is the Ser326.

The protein belongs to the peptidase S1 family. CLIP subfamily. As to quaternary structure, in the active form, heterodimer of a light chain and a heavy chain; disulfide-linked. Forms a covalent heterodimer with intracellular coagulation inhibitor 2/LICI-2. In terms of processing, proteolytically cleaved into its mature active form by serine protease factor B. Cleavage produces a 25 kDa light chain containing the CLIP domain and a catalytic 31 kDa heavy chain which remain covalently associated through an interchain disulfide bond. Proteolytically cleaved by clotting factor G subunit beta. Contains six O-linked carbohydrate chains in the N-terminal light chain. As to expression, expressed in hemocytes (at protein level).

It is found in the cytoplasmic vesicle. Its subcellular location is the secretory vesicle. The protein resides in the secreted. It carries out the reaction Selective cleavage of 18-Arg-|- and 47-Arg-|- bonds in coagulogen to form coagulin and fragments.. With respect to regulation, inhibited by intracellular coagulation inhibitor 2/LICI-2 and to a lesser extent by intracellular coagulation inhibitor 3/LICI-3. Functionally, this enzyme is closely associated with an endotoxin-sensitive hemolymph coagulation system in limulus. Its active form catalyzes the conversion of coagulogen to insoluble coagulin gel. The protein is Proclotting enzyme of Tachypleus tridentatus (Japanese horseshoe crab).